Consider the following 387-residue polypeptide: 1-deoxy-D-xylulose 5-phosphate reductoisomerase (387 aa).

7 residues coordinate NADPH: T10, G11, S12, I13, G36, N38, and N122. 1-deoxy-D-xylulose 5-phosphate is bound at residue K123. E124 serves as a coordination point for NADPH. Position 148 (D148) interacts with Mn(2+). Residues S149, E150, S174, and H197 each contribute to the 1-deoxy-D-xylulose 5-phosphate site. E150 is a Mn(2+) binding site. G203 contacts NADPH. 4 residues coordinate 1-deoxy-D-xylulose 5-phosphate: S210, N215, K216, and E219. E219 provides a ligand contact to Mn(2+).

This sequence belongs to the DXR family. Requires Mg(2+) as cofactor. It depends on Mn(2+) as a cofactor.

It catalyses the reaction 2-C-methyl-D-erythritol 4-phosphate + NADP(+) = 1-deoxy-D-xylulose 5-phosphate + NADPH + H(+). Its pathway is isoprenoid biosynthesis; isopentenyl diphosphate biosynthesis via DXP pathway; isopentenyl diphosphate from 1-deoxy-D-xylulose 5-phosphate: step 1/6. In terms of biological role, catalyzes the NADPH-dependent rearrangement and reduction of 1-deoxy-D-xylulose-5-phosphate (DXP) to 2-C-methyl-D-erythritol 4-phosphate (MEP). This chain is 1-deoxy-D-xylulose 5-phosphate reductoisomerase, found in Chloroherpeton thalassium (strain ATCC 35110 / GB-78).